Reading from the N-terminus, the 561-residue chain is 2-methylisocitrate lyase, mitochondrial (561 aa).

The tract at residues 154-177 (KAQSMHDRKQWDTRRKMSPDERSK) is disordered. The span at 157-177 (SMHDRKQWDTRRKMSPDERSK) shows a compositional bias: basic and acidic residues. The active site involves cysteine 228.

Belongs to the isocitrate lyase/PEP mutase superfamily. Isocitrate lyase family. Requires Mg(2+) as cofactor.

It localises to the mitochondrion matrix. The enzyme catalyses (2S,3R)-3-hydroxybutane-1,2,3-tricarboxylate = pyruvate + succinate. The protein operates within organic acid metabolism; propanoate degradation. Its function is as follows. Component of the methylcitrate cycle that catalyzes the formation of pyruvate and succinate from 2-methylisocitrate during the metabolism of endogenous propionyl-CoA. Plays an important role for growth and development, but also in antagonism, root colonization and induction of defense responses in plants. This Hypocrea atroviridis (strain ATCC 20476 / IMI 206040) (Trichoderma atroviride) protein is 2-methylisocitrate lyase, mitochondrial.